Consider the following 161-residue polypeptide: Glycine/sarcosine/betaine reductase complex component A2 (161 aa).

Selenocysteine 42 is a catalytic residue. Selenocysteine 42 is a non-standard amino acid (selenocysteine).

The protein belongs to the GrdA family. Monomer. Component of the glycine, sarcosine and betaine reductase complexes, together with components B and C.

The enzyme catalyses acetyl phosphate + [thioredoxin]-disulfide + NH4(+) + H2O = [thioredoxin]-dithiol + glycine + phosphate + H(+). The catalysed reaction is acetyl phosphate + methylamine + [thioredoxin]-disulfide + H2O = sarcosine + [thioredoxin]-dithiol + phosphate + H(+). It catalyses the reaction acetyl phosphate + trimethylamine + [thioredoxin]-disulfide + H2O = glycine betaine + [thioredoxin]-dithiol + phosphate + H(+). Functionally, in the first step of glycine, betaine and sarcosine reductases, the substrate is bound to component PB via a Schiff base intermediate. Then the PB-activated substrate is nucleophilically attacked by the selenol anion of component PA to transform it to a carboxymethylated selenoether and the respective amine. By action of component PC, acetyl phosphate is formed, leaving component PA in its oxidized state. Finally component PA becomes reduced by the thioredoxin system to start a new catalytic cycle of reductive deamination. This Photobacterium profundum (strain SS9) protein is Glycine/sarcosine/betaine reductase complex component A2 (grdA2).